We begin with the raw amino-acid sequence, 483 residues long: Myocilin (483 aa).

Residues 1–18 (MPTAQLLLLACLLWGLEA) form the signal peptide. Asn43 carries N-linked (GlcNAc...) asparagine glycosylation. The stretch at 51–162 (GQAMSAIQDL…SQEVARLRRG (112 aa)) forms a coiled coil. Positions 153 to 179 (SQEVARLRRGQCPQAHSSSQDVPAGSR) are disordered. The region spanning 223–482 (GCGELVWVGE…MVTYDIRLSK (260 aa)) is the Olfactomedin-like domain. A disulfide bridge links Cys224 with Cys412. Residues Asp359, Asn407, Ala408, Ile456, and Asp457 each contribute to the Ca(2+) site. The Microbody targeting signal signature appears at 481–483 (SKM).

Homodimer (via N-terminus). Can also form higher oligomers. Interacts with OLFM3, FN1, NRCAM, GLDN and NFASC. Interacts (via N-terminus) with MYL2. Interacts with SFRP1, FRZB, FZD7, FZD10, FZD1 and WIF1; regulates Wnt signaling. Interacts with SNTA1; regulates muscle hypertrophy. Interacts with ERBB2 and ERBB3; activates ERBB2-ERBB3 signaling pathway. Interacts with SNCG; affects its secretion and its aggregation. Post-translationally, N-glycosylated. In terms of processing, palmitoylated. Undergoes a calcium-dependent proteolytic cleavage at Arg-205 by CAPN2 in the endoplasmic reticulum. The result is the production of two fragments, one of 35 kDa containing the C-terminal olfactomedin-like domain, and another of 20 kDa containing the N-terminal leucine zipper-like domain. Expressed in optic nerve head, ciliary body and retina.

Its subcellular location is the secreted. It localises to the golgi apparatus. The protein resides in the cytoplasmic vesicle. It is found in the extracellular space. The protein localises to the extracellular matrix. Its subcellular location is the extracellular exosome. It localises to the mitochondrion. The protein resides in the mitochondrion intermembrane space. It is found in the mitochondrion inner membrane. The protein localises to the mitochondrion outer membrane. Its subcellular location is the rough endoplasmic reticulum. It localises to the cell projection. The protein resides in the cilium. It is found in the endoplasmic reticulum. Functionally, secreted glycoprotein regulating the activation of different signaling pathways in adjacent cells to control different processes including cell adhesion, cell-matrix adhesion, cytoskeleton organization and cell migration. Promotes substrate adhesion, spreading and formation of focal contacts. Negatively regulates cell-matrix adhesion and stress fiber assembly through Rho protein signal transduction. Modulates the organization of actin cytoskeleton by stimulating the formation of stress fibers through interactions with components of Wnt signaling pathways. Promotes cell migration through activation of PTK2 and the downstream phosphatidylinositol 3-kinase signaling. Plays a role in bone formation and promotes osteoblast differentiation in a dose-dependent manner through mitogen-activated protein kinase signaling. Mediates myelination in the peripheral nervous system through ERBB2/ERBB3 signaling. Plays a role as a regulator of muscle hypertrophy through the components of dystrophin-associated protein complex. Involved in positive regulation of mitochondrial depolarization. Plays a role in neurite outgrowth. May participate in the obstruction of fluid outflow in the trabecular meshwork. The protein is Myocilin (MYOC) of Canis lupus familiaris (Dog).